The chain runs to 815 residues: uncharacterized protein (815 aa).

A DNA-binding region (zn(2)-C6 fungal-type) is located at residues 31–57 (CDMCRRKKIKCDGLRPCKNCKAGKLEC). The helical transmembrane segment at 560–580 (YWTTVYCGFSTIVTLIFAALL) threads the bilayer. Disordered stretches follow at residues 646–668 (ESNVPINNGPQQSIDKESNSNTQ) and 769–792 (DPDVSDGKSRESSSLNNSTPFNPT). Residues 780–792 (SSSLNNSTPFNPT) are compositionally biased toward polar residues.

It is found in the cytoplasm. The protein localises to the nucleus membrane. This is an uncharacterized protein from Schizosaccharomyces pombe (strain 972 / ATCC 24843) (Fission yeast).